A 392-amino-acid polypeptide reads, in one-letter code: Speckle-type POZ protein-like (392 aa).

Residues 31 to 161 (KFSYMWTINN…DDKLTLFCEV (131 aa)) form the MATH domain. Positions 200-267 (TDCSFFVRGQ…IYTGRAPNLD (68 aa)) constitute a BTB domain.

It belongs to the Tdpoz family. In terms of assembly, homodimer. Heterodimer with SPOP. Component of cullin-RING-based BCR (BTB-CUL3-RBX1) E3 ubiquitin-protein ligase complexes containing homodimeric SPOPL or the heterodimer formed by SPOP and SPOPL. Interacts with CUL3 and MACROH2A1.

Its subcellular location is the nucleus. It participates in protein modification; protein ubiquitination. Component of a cullin-RING-based BCR (BTB-CUL3-RBX1) E3 ubiquitin-protein ligase complex that mediates the ubiquitination and subsequent proteasomal degradation of target proteins, but with relatively low efficiency. Cullin-RING-based BCR (BTB-CUL3-RBX1) E3 ubiquitin-protein ligase complexes containing homodimeric SPOPL or the heterodimer formed by SPOP and SPOPL are less efficient than ubiquitin ligase complexes containing only SPOP. May function to down-regulate the activity of cullin-RING-based BCR (BTB-CUL3-RBX1) E3 ubiquitin-protein ligase complexes that contain SPOP. This is Speckle-type POZ protein-like (SPOPL) from Homo sapiens (Human).